A 453-amino-acid polypeptide reads, in one-letter code: tRNA-2-methylthio-N(6)-dimethylallyladenosine synthase (453 aa).

Positions 7-123 (GTYWITTFGC…LDTLLSQVEA (117 aa)) constitute an MTTase N-terminal domain. [4Fe-4S] cluster contacts are provided by cysteine 16, cysteine 52, cysteine 86, cysteine 158, cysteine 162, and cysteine 165. One can recognise a Radical SAM core domain in the interval 144-381 (RDSSLCAWVN…NALVERKAKA (238 aa)). The TRAM domain maps to 384–447 (QRYLGRVEEV…AFSLSGSAQA (64 aa)).

Belongs to the methylthiotransferase family. MiaB subfamily. Monomer. Requires [4Fe-4S] cluster as cofactor.

The protein localises to the cytoplasm. The catalysed reaction is N(6)-dimethylallyladenosine(37) in tRNA + (sulfur carrier)-SH + AH2 + 2 S-adenosyl-L-methionine = 2-methylsulfanyl-N(6)-dimethylallyladenosine(37) in tRNA + (sulfur carrier)-H + 5'-deoxyadenosine + L-methionine + A + S-adenosyl-L-homocysteine + 2 H(+). Catalyzes the methylthiolation of N6-(dimethylallyl)adenosine (i(6)A), leading to the formation of 2-methylthio-N6-(dimethylallyl)adenosine (ms(2)i(6)A) at position 37 in tRNAs that read codons beginning with uridine. This is tRNA-2-methylthio-N(6)-dimethylallyladenosine synthase from Synechococcus sp. (strain RCC307).